A 185-amino-acid chain; its full sequence is Probable gluconokinase (185 aa).

11-18 (GVSGSGKS) contacts ATP.

This sequence belongs to the gluconokinase GntK/GntV family.

The enzyme catalyses D-gluconate + ATP = 6-phospho-D-gluconate + ADP + H(+). Its pathway is carbohydrate acid metabolism; D-gluconate degradation. The protein is Probable gluconokinase (Idnk) of Rattus norvegicus (Rat).